The primary structure comprises 356 residues: DNA polymerase IV (356 aa).

The 188-residue stretch at 1 to 188 (MDTSRKIIHI…IPVTKFYGVG (188 aa)) folds into the UmuC domain. Residues Asp-11 and Asp-106 each coordinate Mg(2+). Glu-107 is an active-site residue.

The protein belongs to the DNA polymerase type-Y family. Monomer. Mg(2+) is required as a cofactor.

The protein resides in the cytoplasm. It catalyses the reaction DNA(n) + a 2'-deoxyribonucleoside 5'-triphosphate = DNA(n+1) + diphosphate. Poorly processive, error-prone DNA polymerase involved in untargeted mutagenesis. Copies undamaged DNA at stalled replication forks, which arise in vivo from mismatched or misaligned primer ends. These misaligned primers can be extended by PolIV. Exhibits no 3'-5' exonuclease (proofreading) activity. May be involved in translesional synthesis, in conjunction with the beta clamp from PolIII. The chain is DNA polymerase IV from Listeria innocua serovar 6a (strain ATCC BAA-680 / CLIP 11262).